Reading from the N-terminus, the 228-residue chain is Cytidylate kinase (228 aa).

Position 12 to 20 (glycine 12 to threonine 20) interacts with ATP.

It belongs to the cytidylate kinase family. Type 1 subfamily.

The protein resides in the cytoplasm. It carries out the reaction CMP + ATP = CDP + ADP. It catalyses the reaction dCMP + ATP = dCDP + ADP. In Pseudomonas putida (strain ATCC 47054 / DSM 6125 / CFBP 8728 / NCIMB 11950 / KT2440), this protein is Cytidylate kinase.